A 194-amino-acid polypeptide reads, in one-letter code: Potassium-transporting ATPase KdpC subunit (194 aa).

Residues 12 to 34 (LFLLLLTGGVYPLLTTALGQWWF) form a helical membrane-spanning segment.

It belongs to the KdpC family. In terms of assembly, the system is composed of three essential subunits: KdpA, KdpB and KdpC.

Its subcellular location is the cell inner membrane. Functionally, part of the high-affinity ATP-driven potassium transport (or Kdp) system, which catalyzes the hydrolysis of ATP coupled with the electrogenic transport of potassium into the cytoplasm. This subunit acts as a catalytic chaperone that increases the ATP-binding affinity of the ATP-hydrolyzing subunit KdpB by the formation of a transient KdpB/KdpC/ATP ternary complex. The sequence is that of Potassium-transporting ATPase KdpC subunit from Salmonella agona (strain SL483).